Consider the following 275-residue polypeptide: HUWE1-associated protein modifying stress responses 1 (275 aa).

Positions A32–E44 are enriched in acidic residues. A disordered region spans residues A32–Q51. An HUWE1-binding and HAPSTR1 oligomerization (HBO) domain region spans residues Q80 to P152. Disordered stretches follow at residues R155 to E181, S204 to N227, and G250 to I275. Position 167 is a phosphoserine (S167). Over residues T172–E181 the composition is skewed to low complexity. Positions S204 to V216 are enriched in polar residues. At S212 the chain carries Phosphoserine.

This sequence belongs to the HAPSTR1 family. As to quaternary structure, homooligomer. Heterooligomer with HAPSTR2; the interaction is direct and stabilizes HAPSTR1. Interacts with HUWE1. In terms of processing, ubiquitinated by HUWE1. Promotes HAPSTR1 degradation through polyubiquitination.

The protein localises to the nucleus. It is found in the cytoplasm. Acts as a central player within a network of stress response pathways promoting cellular adaptability. The E3 ligase HUWE1 assists HAPSTR1 in controlling stress signaling and in turn, HUWE1 feeds back to promote the degradation of HAPSTR1. HAPSTR1 represents a central coordination mechanism for stress response programs. Functions as a negative regulator of TP53/P53 in the cellular response to telomere erosion and probably also DNA damage. May attenuate p53/TP53 activation through the E3 ubiquitin ligase HUWE1. In Homo sapiens (Human), this protein is HUWE1-associated protein modifying stress responses 1.